Here is a 681-residue protein sequence, read N- to C-terminus: Amine oxidase [copper-containing] alpha 3, peroxisomal (681 aa).

Position 323–334 (Tyr-323–Cys-334) interacts with substrate. The Proton acceptor role is filled by Asp-325. A disulfide bridge links Cys-344 with Cys-370. Substrate is bound at residue Val-410 to Tyr-415. The active-site Schiff-base intermediate with substrate; via topaquinone is Tyr-413. The residue at position 413 (Tyr-413) is a 2',4',5'-topaquinone. Cu cation contacts are provided by His-470 and His-472. Residues Asp-481, Asp-621, and Ile-622 each contribute to the Mn(2+) site. His-632 provides a ligand contact to Cu cation.

The protein belongs to the copper/topaquinone oxidase family. Topaquinone (TPQ) is generated by copper-dependent autoxidation of a specific tyrosyl residue. As to expression, mostly expressed in stems, and, at lower levels, in flowers and leaves. Mainly detectable in stipules, hypocotyls and roots.

It localises to the peroxisome. It carries out the reaction a primary methyl amine + O2 + H2O = an aldehyde + H2O2 + NH4(+). The protein operates within amine and polyamine degradation; putrescine degradation. Copper amine oxidase that can use putrescine and spermidine as substrates. Involved in putrescine catabolism in peroxisomes. In Arabidopsis thaliana (Mouse-ear cress), this protein is Amine oxidase [copper-containing] alpha 3, peroxisomal.